Consider the following 790-residue polypeptide: N-methylputrescine oxidase 1, peroxisomal (790 aa).

Residues 1 to 23 (MATTKQKVTAPSPSPSSSTASCC) are disordered. Residues 9-23 (TAPSPSPSSSTASCC) are compositionally biased toward low complexity. 423–434 (AFDAGEDGLGKN) is a binding site for substrate. Catalysis depends on Asp425, which acts as the Proton acceptor. Cys444 and Cys470 are oxidised to a cystine. 506-511 (VANYEY) lines the substrate pocket. Tyr509 (schiff-base intermediate with substrate; via topaquinone) is an active-site residue. Tyr509 is subject to 2',4',5'-topaquinone. His559 and His561 together coordinate Cu cation. Residues Asp714 and Ile715 each coordinate Mn(2+). A Cu cation-binding site is contributed by His725.

Belongs to the copper/topaquinone oxidase family. In terms of assembly, homodimer. Requires Cu cation as cofactor. Zn(2+) serves as cofactor. It depends on L-topaquinone as a cofactor. Post-translationally, topaquinone (TPQ) is generated by copper-dependent autoxidation of a specific tyrosyl residue. As to expression, mainly expressed in roots, and, to a lower extent, in stems.

It localises to the peroxisome. It carries out the reaction a primary methyl amine + O2 + H2O = an aldehyde + H2O2 + NH4(+). The catalysed reaction is N-methylputrescine + O2 + H2O = 4-methylaminobutanal + H2O2 + NH4(+). The protein operates within alkaloid biosynthesis; nicotine biosynthesis. Involved in the biosynthesis of pyridine alkaloid natural products, leading mainly to the production of anabasine, anatabine, nicotine and nornicotine, effective deterrents against herbivores with antiparasitic and pesticide properties (neurotoxins); nornicotine serves as the precursor in the synthesis of the carcinogen compound N'-nitrosonornicotine (NNN). Amine oxidase which mediates the deamination of N-methylputrescine to produce 4-methylaminobutanal. Oxidizes preferentially N-methylated amines. This is N-methylputrescine oxidase 1, peroxisomal from Nicotiana tabacum (Common tobacco).